The following is a 95-amino-acid chain: Aspartyl/glutamyl-tRNA(Asn/Gln) amidotransferase subunit C (95 aa).

Belongs to the GatC family. In terms of assembly, heterotrimer of A, B and C subunits.

It catalyses the reaction L-glutamyl-tRNA(Gln) + L-glutamine + ATP + H2O = L-glutaminyl-tRNA(Gln) + L-glutamate + ADP + phosphate + H(+). The enzyme catalyses L-aspartyl-tRNA(Asn) + L-glutamine + ATP + H2O = L-asparaginyl-tRNA(Asn) + L-glutamate + ADP + phosphate + 2 H(+). Allows the formation of correctly charged Asn-tRNA(Asn) or Gln-tRNA(Gln) through the transamidation of misacylated Asp-tRNA(Asn) or Glu-tRNA(Gln) in organisms which lack either or both of asparaginyl-tRNA or glutaminyl-tRNA synthetases. The reaction takes place in the presence of glutamine and ATP through an activated phospho-Asp-tRNA(Asn) or phospho-Glu-tRNA(Gln). In Laribacter hongkongensis (strain HLHK9), this protein is Aspartyl/glutamyl-tRNA(Asn/Gln) amidotransferase subunit C.